The chain runs to 125 residues: S-adenosylmethionine decarboxylase proenzyme (125 aa).

Ser71 acts as the Schiff-base intermediate with substrate; via pyruvic acid in catalysis. Pyruvic acid (Ser); by autocatalysis is present on Ser71. His76 acts as the Proton acceptor; for processing activity in catalysis. Residue Cys91 is the Proton donor; for catalytic activity of the active site.

The protein belongs to the prokaryotic AdoMetDC family. Type 1 subfamily. Heterotetramer of two alpha and two beta chains arranged as a dimer of alpha/beta heterodimers. The cofactor is pyruvate. In terms of processing, is synthesized initially as an inactive proenzyme. Formation of the active enzyme involves a self-maturation process in which the active site pyruvoyl group is generated from an internal serine residue via an autocatalytic post-translational modification. Two non-identical subunits are generated from the proenzyme in this reaction, and the pyruvate is formed at the N-terminus of the alpha chain, which is derived from the carboxyl end of the proenzyme. The post-translation cleavage follows an unusual pathway, termed non-hydrolytic serinolysis, in which the side chain hydroxyl group of the serine supplies its oxygen atom to form the C-terminus of the beta chain, while the remainder of the serine residue undergoes an oxidative deamination to produce ammonia and the pyruvoyl group blocking the N-terminus of the alpha chain.

It catalyses the reaction S-adenosyl-L-methionine + H(+) = S-adenosyl 3-(methylsulfanyl)propylamine + CO2. The protein operates within amine and polyamine biosynthesis; S-adenosylmethioninamine biosynthesis; S-adenosylmethioninamine from S-adenosyl-L-methionine: step 1/1. Catalyzes the decarboxylation of S-adenosylmethionine to S-adenosylmethioninamine (dcAdoMet), the propylamine donor required for the synthesis of the polyamines spermine and spermidine from the diamine putrescine. The chain is S-adenosylmethionine decarboxylase proenzyme from Pyrobaculum islandicum (strain DSM 4184 / JCM 9189 / GEO3).